Here is a 108-residue protein sequence, read N- to C-terminus: UPF0102 protein Sden_0272 (108 aa).

This sequence belongs to the UPF0102 family.

This is UPF0102 protein Sden_0272 from Shewanella denitrificans (strain OS217 / ATCC BAA-1090 / DSM 15013).